We begin with the raw amino-acid sequence, 570 residues long: Sulfite reductase [NADPH] hemoprotein beta-component (570 aa).

Cys-434, Cys-440, Cys-479, and Cys-483 together coordinate [4Fe-4S] cluster. Cys-483 contacts siroheme.

Belongs to the nitrite and sulfite reductase 4Fe-4S domain family. Alpha(8)-beta(8). The alpha component is a flavoprotein, the beta component is a hemoprotein. Siroheme is required as a cofactor. It depends on [4Fe-4S] cluster as a cofactor.

It catalyses the reaction hydrogen sulfide + 3 NADP(+) + 3 H2O = sulfite + 3 NADPH + 4 H(+). It functions in the pathway sulfur metabolism; hydrogen sulfide biosynthesis; hydrogen sulfide from sulfite (NADPH route): step 1/1. Component of the sulfite reductase complex that catalyzes the 6-electron reduction of sulfite to sulfide. This is one of several activities required for the biosynthesis of L-cysteine from sulfate. In Zymomonas mobilis subsp. mobilis (strain ATCC 31821 / ZM4 / CP4), this protein is Sulfite reductase [NADPH] hemoprotein beta-component.